A 204-amino-acid chain; its full sequence is Paraneoplastic antigen-like protein 8C (204 aa).

Residues 135–204 (PPATGPRELP…RRHHASDKKL (70 aa)) are disordered. Positions 182 to 204 (VGKRGKRKNKKNRRRHHASDKKL) are enriched in basic residues.

The protein belongs to the PNMA family.

This Homo sapiens (Human) protein is Paraneoplastic antigen-like protein 8C.